The primary structure comprises 549 residues: Glucose-6-phosphate isomerase (549 aa).

Glu-355 functions as the Proton donor in the catalytic mechanism. Active-site residues include His-387 and Lys-515.

It belongs to the GPI family.

The protein localises to the cytoplasm. The catalysed reaction is alpha-D-glucose 6-phosphate = beta-D-fructose 6-phosphate. Its pathway is carbohydrate biosynthesis; gluconeogenesis. It participates in carbohydrate degradation; glycolysis; D-glyceraldehyde 3-phosphate and glycerone phosphate from D-glucose: step 2/4. In terms of biological role, catalyzes the reversible isomerization of glucose-6-phosphate to fructose-6-phosphate. The sequence is that of Glucose-6-phosphate isomerase from Haemophilus influenzae (strain PittGG).